The sequence spans 372 residues: Cytochrome b (372 aa).

Helical transmembrane passes span 25-45 (FGSM…FLAI), 69-90 (WTMQ…YIHI), 105-125 (WLSG…GYVL), and 170-190 (FFAL…IHII). Heme b is bound by residues His75 and His89. Heme b contacts are provided by His174 and His188. Position 193 (His193) interacts with a ubiquinone. Transmembrane regions (helical) follow at residues 218–238 (YKDI…MAFA), 280–300 (LGGT…PFTH), 312–332 (LAQM…WTAT), and 339–358 (FILI…IINP).

It belongs to the cytochrome b family. In terms of assembly, the cytochrome bc1 complex contains 3 respiratory subunits (MT-CYB, CYC1 and UQCRFS1), 2 core proteins (UQCRC1 and UQCRC2) and probably 6 low-molecular weight proteins. Heme b is required as a cofactor.

The protein resides in the mitochondrion inner membrane. Component of the ubiquinol-cytochrome c reductase complex (complex III or cytochrome b-c1 complex) that is part of the mitochondrial respiratory chain. The b-c1 complex mediates electron transfer from ubiquinol to cytochrome c. Contributes to the generation of a proton gradient across the mitochondrial membrane that is then used for ATP synthesis. The sequence is that of Cytochrome b (MT-CYB) from Acanthophis antarcticus (Common death adder).